The sequence spans 548 residues: 5-epi-aristolochene synthase 2 (548 aa).

5 residues coordinate Mg(2+): Asp301, Asp305, Asp444, Thr448, and Glu452. Positions 301–305 (DDTFD) match the DDXXD motif motif.

Belongs to the terpene synthase family. In terms of assembly, monomer. Mg(2+) is required as a cofactor. In terms of tissue distribution, expressed in roots, but not in shoots.

It is found in the cytoplasm. The enzyme catalyses (2E,6E)-farnesyl diphosphate = (+)-5-epi-aristolochene + diphosphate. It functions in the pathway secondary metabolite biosynthesis; terpenoid biosynthesis. Its function is as follows. Catalyzes the cyclization of trans,trans-farnesyl diphosphate (FPP) to the bicyclic intermediate 5-epi-aristolochene, initial step in the conversion of FPP to the sesquiterpenoid antifungal phytoalexin capsidiol. Produces germacrene A as an enzyme-bound intermediate that is not released by the enzyme, but is further cyclized to produce the bicyclic 5-epi-aristolochene. The chain is 5-epi-aristolochene synthase 2 from Nicotiana attenuata (Coyote tobacco).